Here is a 448-residue protein sequence, read N- to C-terminus: MGKYFGTDGVRGVANQELTPELAFKIGRFGGYVLTKDTDRPKVIIGRDTRISGHMLEGALVAGLLSTGAEVMRLGVISTPGVAYLTKALDAQAGVMISASHNPVQDNGIKFFGSDGFKLTDEQEAEIEALLDKEVDELPRPTGTNLGQVSDYFEGGQKYLQYIKQTVEEDFSGLHIALDCAHGATSSLAPYLFADLEADISTMGTSPNGMNINDGVGSTHPEVLAELVKEKGADIGLAFDGDGDRLIAVDEKGNIVDGDQIMFICAKYMKETGQLKHNTVVSTVMSNLGFYKALEANGITSDKTAVGDRYVMEEMKRGGYNLGGEQSGHIILLDYITTGDGMLSALQLVNIMKMTKKPLSELAGEMTKFPQLLVNVRVTDKKLALENEKIKEIIRVVEEEMNGDGRILVRPSGTEPLIRVMAEAPTQEVCDAYVHRIVEVVKAEVGAE.

Catalysis depends on S100, which acts as the Phosphoserine intermediate. Mg(2+) contacts are provided by S100, D240, D242, and D244. S100 carries the post-translational modification Phosphoserine.

It belongs to the phosphohexose mutase family. Requires Mg(2+) as cofactor. Post-translationally, activated by phosphorylation.

The enzyme catalyses alpha-D-glucosamine 1-phosphate = D-glucosamine 6-phosphate. Catalyzes the conversion of glucosamine-6-phosphate to glucosamine-1-phosphate. This is Phosphoglucosamine mutase from Bacillus cereus (strain ATCC 10987 / NRS 248).